Here is a 374-residue protein sequence, read N- to C-terminus: Phosphatidylglycerol--prolipoprotein diacylglyceryl transferase (374 aa).

4 consecutive transmembrane segments (helical) span residues isoleucine 33–phenylalanine 53, leucine 155–tyrosine 175, leucine 195–isoleucine 215, and leucine 222–isoleucine 242. Position 243 (arginine 243) interacts with a 1,2-diacyl-sn-glycero-3-phospho-(1'-sn-glycerol). Transmembrane regions (helical) follow at residues proline 279–tryptophan 299, leucine 306–leucine 326, and isoleucine 341–tryptophan 361.

It belongs to the Lgt family.

The protein localises to the cell inner membrane. It catalyses the reaction L-cysteinyl-[prolipoprotein] + a 1,2-diacyl-sn-glycero-3-phospho-(1'-sn-glycerol) = an S-1,2-diacyl-sn-glyceryl-L-cysteinyl-[prolipoprotein] + sn-glycerol 1-phosphate + H(+). The protein operates within protein modification; lipoprotein biosynthesis (diacylglyceryl transfer). Its function is as follows. Catalyzes the transfer of the diacylglyceryl group from phosphatidylglycerol to the sulfhydryl group of the N-terminal cysteine of a prolipoprotein, the first step in the formation of mature lipoproteins. This is Phosphatidylglycerol--prolipoprotein diacylglyceryl transferase from Protochlamydia amoebophila (strain UWE25).